Reading from the N-terminus, the 134-residue chain is Cystatin-1 (134 aa).

Positions 1-17 are cleaved as a signal peptide; it reads MKAIYLILTVLCGFSAS. The 96-residue stretch at 21 to 116 folds into the Cystatin domain; that stretch reads GGWRDKDVDD…CTAIIWTRSW (96 aa). Residues 65–69 carry the Secondary area of contact motif; it reads QVVSG. Cystine bridges form between cysteine 83–cysteine 96 and cysteine 107–cysteine 127.

Belongs to the cystatin family. Expressed by the venom gland.

It is found in the secreted. Inhibits various C1 cysteine proteases. This protein has no toxic activity and its function in the venom is unknown. It may play a role as a housekeeping or regulatory protein. This Chilobrachys guangxiensis (Chinese earth tiger tarantula) protein is Cystatin-1.